A 306-amino-acid chain; its full sequence is Aspartate carbamoyltransferase catalytic subunit (306 aa).

2 residues coordinate carbamoyl phosphate: R51 and T52. Position 79 (K79) interacts with L-aspartate. 3 residues coordinate carbamoyl phosphate: R101, H129, and Q132. R162 and R213 together coordinate L-aspartate. The carbamoyl phosphate site is built by A254 and P255.

It belongs to the aspartate/ornithine carbamoyltransferase superfamily. ATCase family. Heterododecamer (2C3:3R2) of six catalytic PyrB chains organized as two trimers (C3), and six regulatory PyrI chains organized as three dimers (R2).

It catalyses the reaction carbamoyl phosphate + L-aspartate = N-carbamoyl-L-aspartate + phosphate + H(+). Its pathway is pyrimidine metabolism; UMP biosynthesis via de novo pathway; (S)-dihydroorotate from bicarbonate: step 2/3. Its function is as follows. Catalyzes the condensation of carbamoyl phosphate and aspartate to form carbamoyl aspartate and inorganic phosphate, the committed step in the de novo pyrimidine nucleotide biosynthesis pathway. This chain is Aspartate carbamoyltransferase catalytic subunit, found in Bacillus thuringiensis (strain Al Hakam).